Consider the following 548-residue polypeptide: ATP synthase subunit alpha (548 aa).

172-179 (GDRKTGKT) provides a ligand contact to ATP. A disordered region spans residues 526-548 (AEAMDEADVEKESVKVRKPAPKK).

It belongs to the ATPase alpha/beta chains family. In terms of assembly, F-type ATPases have 2 components, CF(1) - the catalytic core - and CF(0) - the membrane proton channel. CF(1) has five subunits: alpha(3), beta(3), gamma(1), delta(1), epsilon(1). CF(0) has three main subunits: a(1), b(2) and c(9-12). The alpha and beta chains form an alternating ring which encloses part of the gamma chain. CF(1) is attached to CF(0) by a central stalk formed by the gamma and epsilon chains, while a peripheral stalk is formed by the delta and b chains.

It localises to the cell membrane. The catalysed reaction is ATP + H2O + 4 H(+)(in) = ADP + phosphate + 5 H(+)(out). Its function is as follows. Produces ATP from ADP in the presence of a proton gradient across the membrane. The alpha chain is a regulatory subunit. The polypeptide is ATP synthase subunit alpha (Mycolicibacterium vanbaalenii (strain DSM 7251 / JCM 13017 / BCRC 16820 / KCTC 9966 / NRRL B-24157 / PYR-1) (Mycobacterium vanbaalenii)).